The sequence spans 442 residues: D-serine dehydratase (442 aa).

N6-(pyridoxal phosphate)lysine is present on Lys-118.

Belongs to the serine/threonine dehydratase family. DsdA subfamily. As to quaternary structure, monomer. It depends on pyridoxal 5'-phosphate as a cofactor.

It carries out the reaction D-serine = pyruvate + NH4(+). This is D-serine dehydratase from Escherichia coli (strain 55989 / EAEC).